We begin with the raw amino-acid sequence, 477 residues long: Argininosuccinate lyase (477 aa).

This sequence belongs to the lyase 1 family. Argininosuccinate lyase subfamily.

It localises to the cytoplasm. The enzyme catalyses 2-(N(omega)-L-arginino)succinate = fumarate + L-arginine. Its pathway is amino-acid biosynthesis; L-arginine biosynthesis; L-arginine from L-ornithine and carbamoyl phosphate: step 3/3. The chain is Argininosuccinate lyase from Corynebacterium efficiens (strain DSM 44549 / YS-314 / AJ 12310 / JCM 11189 / NBRC 100395).